A 139-amino-acid polypeptide reads, in one-letter code: Large ribosomal subunit protein bL17 (139 aa).

The protein belongs to the bacterial ribosomal protein bL17 family. In terms of assembly, part of the 50S ribosomal subunit. Contacts protein L32.

In Sphingopyxis alaskensis (strain DSM 13593 / LMG 18877 / RB2256) (Sphingomonas alaskensis), this protein is Large ribosomal subunit protein bL17.